The chain runs to 723 residues: Choline transporter-like protein 4 (723 aa).

Topologically, residues 1–36 (MGKKKQEEEQNSSEYGAPAQYDPTFNGPIHKRSCTD) are cytoplasmic. The helical transmembrane segment at 37–57 (IICCVLFMLVITGYMVVGILA) threads the bilayer. At 58-245 (WLYGDPRHVL…RIFEDFAKTW (188 aa)) the chain is on the extracellular side. Residues asparagine 71, asparagine 202, asparagine 211, and asparagine 219 are each glycosylated (N-linked (GlcNAc...) asparagine). Residues 246–266 (QWIVAGLVIAMVVSVLFLLLL) form a helical membrane-spanning segment. Residues 267 to 269 (RFT) are Cytoplasmic-facing. Residues 270 to 290 (APVLIWILIFGVLAVGAFGIW) form a helical membrane-spanning segment. Residues 291–325 (YCYNDYMSLASSNLTFSNVGFTTNVQVYLQVRDTW) lie on the Extracellular side of the membrane. Residue asparagine 303 is glycosylated (N-linked (GlcNAc...) asparagine). Residues 326–346 (LAFLIILCIVEAVLILALIFL) form a helical membrane-spanning segment. At 347–374 (RTRILIAIALIQETSKALGHMMSTLLYP) the chain is on the cytoplasmic side. Residues 375–395 (VVTFVLLLVCVSYWGITALYL) traverse the membrane as a helical segment. Topologically, residues 396 to 464 (ATSGAPIYKV…RNLFNLQIYN (69 aa)) are extracellular. Residues asparagine 409, asparagine 421, and asparagine 430 are each glycosylated (N-linked (GlcNAc...) asparagine). A helical transmembrane segment spans residues 465–485 (VVAFLWCVNFVIALGHCTLAG). Residues 486–516 (AFASYYWAFSKPADIPTFPLTQSFMRALRYH) are Cytoplasmic-facing. A helical transmembrane segment spans residues 517–537 (VGSLAFGALILTLVQIVRIIL). Residues 538-578 (EYLDHKFKAAQNPCARFLMCCLKCCFWCLEKFIKFINRNAY) are Extracellular-facing. Residues 579 to 599 (IMIAIYGKNFCVSAKNAFFLL) form a helical membrane-spanning segment. Residues 600–615 (MRNIVRVVVLDKVTDL) are Cytoplasmic-facing. Residues 616–636 (LLFFGKLLVVGGIGVLAFFFF) form a helical membrane-spanning segment. The Extracellular portion of the chain corresponds to 637–655 (SGRIQLPGNTFQTAALNYY). A helical transmembrane segment spans residues 656-676 (WMPIITVVFGAYLIAHGFFSV). The Cytoplasmic segment spans residues 677-723 (YNMGVDTLFLCFLEDLERNDGSAEKPYFMSKNLMKILNKKNKQPKTG).

The protein belongs to the CTL (choline transporter-like) family.

The protein resides in the membrane. Its subcellular location is the apical cell membrane. The catalysed reaction is choline(out) + n H(+)(in) = choline(in) + n H(+)(out). It carries out the reaction thiamine diphosphate(out) = thiamine diphosphate(in). Functionally, choline transporter that seems to play a role in the choline-acetylcholine system and is required to the efferent innervation of hair cells in the olivocochlear bundle for the maintenance of physiological function of outer hair cells and the protection of hair cells from acoustic injury. Also described as a thiamine pyrophosphate transporter. In Danio rerio (Zebrafish), this protein is Choline transporter-like protein 4 (slc44a4).